A 788-amino-acid polypeptide reads, in one-letter code: Protein translocase subunit SecA 2 (788 aa).

ATP-binding positions include Gln86, 104–108 (GEGKT), and Asp493.

It belongs to the SecA family. In terms of assembly, monomer and homodimer. Part of the essential Sec protein translocation apparatus which comprises SecA, SecYEG and auxiliary proteins SecDF. Other proteins may also be involved.

It is found in the cell membrane. Its subcellular location is the cytoplasm. It catalyses the reaction ATP + H2O + cellular proteinSide 1 = ADP + phosphate + cellular proteinSide 2.. Functionally, part of the Sec protein translocase complex. Interacts with the SecYEG preprotein conducting channel. Has a central role in coupling the hydrolysis of ATP to the transfer of proteins into and across the cell membrane, serving as an ATP-driven molecular motor driving the stepwise translocation of polypeptide chains across the membrane. The sequence is that of Protein translocase subunit SecA 2 from Bacillus thuringiensis (strain Al Hakam).